Reading from the N-terminus, the 187-residue chain is MSKQEQIEQTIYQLLELLGEDPNREGLLDTPKRVAKMYLEMFNGLEEDPKDQFTAVFSEGHEEVVLVKDIPFHSMCEHHLVPFYGIAHVAYIPSKGRVTGLSKLARAVEVASRRPQLQERLTHQVAHALQDALEPEGVFVMVEAEHMCMSMRGIRKPGSKTVTTVALGKYKEDAILRRELLSMIHNK.

Positions 76, 79, and 148 each coordinate Zn(2+).

The protein belongs to the GTP cyclohydrolase I family. In terms of assembly, toroid-shaped homodecamer, composed of two pentamers of five dimers.

The catalysed reaction is GTP + H2O = 7,8-dihydroneopterin 3'-triphosphate + formate + H(+). Its pathway is cofactor biosynthesis; 7,8-dihydroneopterin triphosphate biosynthesis; 7,8-dihydroneopterin triphosphate from GTP: step 1/1. The sequence is that of GTP cyclohydrolase 1 from Streptococcus suis (strain 98HAH33).